We begin with the raw amino-acid sequence, 322 residues long: Ribosomal RNA small subunit methyltransferase H (322 aa).

S-adenosyl-L-methionine-binding positions include 35 to 37, aspartate 52, phenylalanine 79, aspartate 100, and glutamine 107; that span reads GGY. Positions 254–322 are disordered; sequence GATPAGSRHL…TAPKKEGRQG (69 aa). The segment covering 295–309 has biased composition (low complexity); sequence SRSATLRVARRTAAA.

The protein belongs to the methyltransferase superfamily. RsmH family.

The protein localises to the cytoplasm. It catalyses the reaction cytidine(1402) in 16S rRNA + S-adenosyl-L-methionine = N(4)-methylcytidine(1402) in 16S rRNA + S-adenosyl-L-homocysteine + H(+). In terms of biological role, specifically methylates the N4 position of cytidine in position 1402 (C1402) of 16S rRNA. In Rhizorhabdus wittichii (strain DSM 6014 / CCUG 31198 / JCM 15750 / NBRC 105917 / EY 4224 / RW1) (Sphingomonas wittichii), this protein is Ribosomal RNA small subunit methyltransferase H.